Here is a 252-residue protein sequence, read N- to C-terminus: MESGLIRRLAPRLGIAEQEVLRKAEEYLRLSRVKCVGLSARTTETSNAVMCLDLAASCMKCPLDRAYLIKLSGLNKKMYQSCLKSFECLLGLNSNIGIRDLAVQFSCTEAVNLASKILQSYESSLPQTQQVDLDLSRPLFTTAALLSACKILKLKVDRNKMAATSGVKKAIFDRLCKQLEKIGQQIDREAGDSVTPPQKKKKTVIEPSAKEIENVVETLPKPQKDEDLTQDYEEWKRNILENAARAQKAATQ.

Phosphothreonine is present on Thr-195. A Glycyl lysine isopeptide (Lys-Gly) (interchain with G-Cter in SUMO2) cross-link involves residue Lys-210. The residue at position 229 (Thr-229) is a Phosphothreonine.

The protein belongs to the ORC6 family. Component of ORC, a complex composed of at least 6 subunits: ORC1, ORC2, ORC3, ORC4, ORC5 and ORC6. ORC is regulated in a cell-cycle dependent manner. It is sequentially assembled at the exit from anaphase of mitosis and disassembled as cells enter S phase. Interacts with DBF4.

The protein localises to the nucleus. Functionally, component of the origin recognition complex (ORC) that binds origins of replication. DNA-binding is ATP-dependent. The specific DNA sequences that define origins of replication have not been identified yet. ORC is required to assemble the pre-replication complex necessary to initiate DNA replication. The chain is Origin recognition complex subunit 6 (ORC6) from Bos taurus (Bovine).